The chain runs to 369 residues: Quinolinate synthase (369 aa).

Residues H47 and S64 each contribute to the iminosuccinate site. Residue C111 participates in [4Fe-4S] cluster binding. Iminosuccinate-binding positions include 142-144 (YVN) and S163. C231 is a binding site for [4Fe-4S] cluster. Iminosuccinate is bound by residues 257 to 259 (HPE) and T274. C321 contacts [4Fe-4S] cluster.

This sequence belongs to the quinolinate synthase family. Type 3 subfamily. The cofactor is [4Fe-4S] cluster.

It localises to the cytoplasm. The catalysed reaction is iminosuccinate + dihydroxyacetone phosphate = quinolinate + phosphate + 2 H2O + H(+). Its pathway is cofactor biosynthesis; NAD(+) biosynthesis; quinolinate from iminoaspartate: step 1/1. Its function is as follows. Catalyzes the condensation of iminoaspartate with dihydroxyacetone phosphate to form quinolinate. The chain is Quinolinate synthase from Bacillus pumilus (strain SAFR-032).